Here is a 254-residue protein sequence, read N- to C-terminus: Phosphomannomutase (254 aa).

Asp16 acts as the Nucleophile in catalysis. Positions 16 and 18 each coordinate Mg(2+). The Proton donor/acceptor role is filled by Asp18. Arg25, Arg129, Arg140, Arg147, Ser185, and Asp187 together coordinate alpha-D-mannose 1-phosphate. Mg(2+) is bound by residues Asp216, Tyr228, Asp230, and Thr233.

This sequence belongs to the eukaryotic PMM family. In terms of assembly, homodimer.

The protein resides in the cytoplasm. The catalysed reaction is alpha-D-mannose 1-phosphate = D-mannose 6-phosphate. Its pathway is nucleotide-sugar biosynthesis; GDP-alpha-D-mannose biosynthesis; alpha-D-mannose 1-phosphate from D-fructose 6-phosphate: step 2/2. Its function is as follows. Involved in the synthesis of the GDP-mannose and dolichol-phosphate-mannose required for a number of critical mannosyl transfer reactions. Required for maintaining N-linked glycoprotein glycosylation at the neuromuscular junction (NMJ) synaptomatrix, and thus acts in multiple pathways that prevent NMJ structural overgrowth, restrict synaptic bouton differentiation, and limit NMJ neurotransmission strength, in order to maintain viability, coordinate movement, and in adults ensure correct wing positioning. Acts in the NMJ trans-synaptic Wg pathway via glycosylation of synaptic Mmp2 which enables dlp/wg signaling during development. This Drosophila melanogaster (Fruit fly) protein is Phosphomannomutase.